The chain runs to 237 residues: Mediator of RNA polymerase II transcription subunit 20 (237 aa).

It belongs to the Mediator complex subunit 20 family. Component of the Mediator complex.

The protein resides in the nucleus. Component of the Mediator complex, a coactivator involved in the regulated transcription of nearly all RNA polymerase II-dependent genes. Mediator functions as a bridge to convey information from gene-specific regulatory proteins to the basal RNA polymerase II transcription machinery. Mediator is recruited to promoters by direct interactions with regulatory proteins and serves as a scaffold for the assembly of a functional preinitiation complex with RNA polymerase II and the general transcription factors. The polypeptide is Mediator of RNA polymerase II transcription subunit 20 (SRB2) (Scheffersomyces stipitis (strain ATCC 58785 / CBS 6054 / NBRC 10063 / NRRL Y-11545) (Yeast)).